A 120-amino-acid chain; its full sequence is Small ribosomal subunit protein uS12 (120 aa).

Asp-88 carries the post-translational modification 3-methylthioaspartic acid.

The protein belongs to the universal ribosomal protein uS12 family. In terms of assembly, part of the 30S ribosomal subunit. Contacts proteins S8 and S17. May interact with IF1 in the 30S initiation complex.

In terms of biological role, with S4 and S5 plays an important role in translational accuracy. Functionally, interacts with and stabilizes bases of the 16S rRNA that are involved in tRNA selection in the A site and with the mRNA backbone. Located at the interface of the 30S and 50S subunits, it traverses the body of the 30S subunit contacting proteins on the other side and probably holding the rRNA structure together. The combined cluster of proteins S8, S12 and S17 appears to hold together the shoulder and platform of the 30S subunit. In Carsonella ruddii (strain PV), this protein is Small ribosomal subunit protein uS12.